The chain runs to 361 residues: UDP-3-O-acylglucosamine N-acyltransferase (361 aa).

Residue histidine 253 is the Proton acceptor of the active site.

Belongs to the transferase hexapeptide repeat family. LpxD subfamily. As to quaternary structure, homotrimer.

The catalysed reaction is a UDP-3-O-[(3R)-3-hydroxyacyl]-alpha-D-glucosamine + a (3R)-hydroxyacyl-[ACP] = a UDP-2-N,3-O-bis[(3R)-3-hydroxyacyl]-alpha-D-glucosamine + holo-[ACP] + H(+). Its pathway is bacterial outer membrane biogenesis; LPS lipid A biosynthesis. Its function is as follows. Catalyzes the N-acylation of UDP-3-O-acylglucosamine using 3-hydroxyacyl-ACP as the acyl donor. Is involved in the biosynthesis of lipid A, a phosphorylated glycolipid that anchors the lipopolysaccharide to the outer membrane of the cell. The sequence is that of UDP-3-O-acylglucosamine N-acyltransferase from Burkholderia thailandensis (strain ATCC 700388 / DSM 13276 / CCUG 48851 / CIP 106301 / E264).